The following is a 431-amino-acid chain: Adenylosuccinate synthetase (431 aa).

GTP-binding positions include 12 to 18 and 40 to 42; these read GDEGKGK and GHT. Asp-13 functions as the Proton acceptor in the catalytic mechanism. Residues Asp-13 and Gly-40 each contribute to the Mg(2+) site. Residues 13-16, 38-41, Thr-130, Arg-144, Gln-225, Thr-240, and Arg-304 each bind IMP; these read DEGK and NAGH. Catalysis depends on His-41, which acts as the Proton donor. 300–306 lines the substrate pocket; that stretch reads ATTGRPR. GTP is bound by residues Arg-306, 332–334, and 414–416; these read KLD and SVG.

This sequence belongs to the adenylosuccinate synthetase family. In terms of assembly, homodimer. It depends on Mg(2+) as a cofactor.

The protein localises to the cytoplasm. The catalysed reaction is IMP + L-aspartate + GTP = N(6)-(1,2-dicarboxyethyl)-AMP + GDP + phosphate + 2 H(+). Its pathway is purine metabolism; AMP biosynthesis via de novo pathway; AMP from IMP: step 1/2. Plays an important role in the de novo pathway of purine nucleotide biosynthesis. Catalyzes the first committed step in the biosynthesis of AMP from IMP. The protein is Adenylosuccinate synthetase of Anaeromyxobacter sp. (strain Fw109-5).